The sequence spans 495 residues: 2-carboxy-D-arabinitol-1-phosphatase (495 aa).

Residues Met1–Pro12 show a composition bias toward pro residues. The disordered stretch occupies residues Met1–Ala23. Residues Met1–Ala50 constitute a chloroplast transit peptide. His58 acts as the Tele-phosphohistidine intermediate in catalysis. Residue Glu132 is the Proton donor/acceptor of the active site.

This sequence belongs to the phosphoglycerate mutase family.

Its subcellular location is the plastid. It is found in the chloroplast stroma. The enzyme catalyses 2-carboxy-D-arabinitol 1-phosphate + H2O = 2-carboxy-D-arabinitol + phosphate. With respect to regulation, inactivated by oxidized glutathione (GSSG) at pH 8.0. Its function is as follows. Phosphoglycerate mutase-like protein lacking PGM activity, but having 2-carboxy-D-arabinitol 1-phosphate (CA1P) phosphatase activity. Can dephosphorylate the closely related compounds 2-carboxy-D-arabinitol 1,5-bisphosphate (CABP) and 2-carboxy-D-ribitol-1,5-bisphosphate(CRBP), and 2,3-diphosphoglycerate. Prevents the accumulation of D-glycero-2,3-pentodiulose-1,5-bisphosphate (PDBP) a potent inhibitor of ribulose-1,5-bisphosphate carboxylase (RuBisCO). PDBP is produced during the oxidation of ribulose-1,5-bisphosphate, the substrate of RuBisCO. The protein is 2-carboxy-D-arabinitol-1-phosphatase of Triticum aestivum (Wheat).